The primary structure comprises 278 residues: Cyclin-C (278 aa).

The Cyclin N-terminal domain maps to 41–139 (NVIQALGEHL…ILECEFYLLE (99 aa)). Positions 247 to 278 (TILSKMPKPKPPPNSEGEQGPNGSQNSSYSQS) are disordered. Residues 267 to 278 (PNGSQNSSYSQS) show a composition bias toward polar residues. Residue Ser270 is modified to Phosphoserine.

It belongs to the cyclin family. Cyclin C subfamily. As to quaternary structure, component of the Mediator complex, which is composed of MED1, MED4, MED6, MED7, MED8, MED9, MED10, MED11, MED12, MED13, MED13L, MED14, MED15, MED16, MED17, MED18, MED19, MED20, MED21, MED22, MED23, MED24, MED25, MED26, MED27, MED29, MED30, MED31, CCNC, CDK8 and CDC2L6/CDK11. The MED12, MED13, CCNC and CDK8 subunits form a distinct module termed the CDK8 module. Mediator containing the CDK8 module is less active than Mediator lacking this module in supporting transcriptional activation. Individual preparations of the Mediator complex lacking one or more distinct subunits have been variously termed ARC, CRSP, DRIP, PC2, SMCC and TRAP. The cylin/CDK pair formed by CCNC/CDK8 also associates with the large subunit of RNA polymerase II.

It localises to the nucleus. Component of the Mediator complex, a coactivator involved in regulated gene transcription of nearly all RNA polymerase II-dependent genes. Mediator functions as a bridge to convey information from gene-specific regulatory proteins to the basal RNA polymerase II transcription machinery. Mediator is recruited to promoters by direct interactions with regulatory proteins and serves as a scaffold for the assembly of a functional preinitiation complex with RNA polymerase II and the general transcription factors. Binds to and activates cyclin-dependent kinase CDK8 that phosphorylates the CTD (C-terminal domain) of the large subunit of RNA polymerase II (RNAp II), which may inhibit the formation of a transcription initiation complex. The polypeptide is Cyclin-C (Ccnc) (Rattus norvegicus (Rat)).